The primary structure comprises 163 residues: Glycine cleavage system H-like protein gcvH5, mitochondrial (163 aa).

The transit peptide at methionine 1–tyrosine 23 directs the protein to the mitochondrion. The region spanning isoleucine 50–lysine 136 is the Lipoyl-binding domain.

The protein belongs to the GcvH family.

It is found in the mitochondrion. In Dictyostelium discoideum (Social amoeba), this protein is Glycine cleavage system H-like protein gcvH5, mitochondrial (gcvH5).